Consider the following 731-residue polypeptide: Penicillin-binding protein 2a (731 aa).

Over 1–56 (MKLDKLFEKFLSLFKKETSELEDSDSTILRRSRSDRKKLAQVGPIRKFWRRYHLTK) the chain is Cytoplasmic. Residues 57 to 77 (IILILGLSAGLLVGIYLFAVA) form a helical; Signal-anchor for type II membrane protein membrane-spanning segment. The segment at 78 to 156 (KSTNVNDLQN…FLAIVTAGRS (79 aa)) is hydrophobic; associated with cytoplasmic membrane. Required for transglycosylase activity, but not for lipid II binding. The segment at 78 to 300 (KSTNVNDLQN…SQLHDKYEGK (223 aa)) is transglycosylase. The Extracellular segment spans residues 78–731 (KSTNVNDLQN…IWDSIVNLFR (654 aa)). E131 serves as the catalytic Proton donor; for transglycosylase activity. Residues 301 to 731 (ISDYRYPSYF…IWDSIVNLFR (431 aa)) are transpeptidase. Catalysis depends on S410, which acts as the Acyl-ester intermediate; for transpeptidase activity. The interval 674–694 (ANTKRQVQTNDNSQTDDNLSD) is disordered. Over residues 676–690 (TKRQVQTNDNSQTDD) the composition is skewed to polar residues.

It in the N-terminal section; belongs to the glycosyltransferase 51 family. In the C-terminal section; belongs to the transpeptidase family. In terms of assembly, homodimer. May also form higher order oligomers. Self-association may depend on its transmembrane and/or cytoplasmic regions. Interacts with MacP; interaction is required for the function of this protein.

It is found in the cell membrane. The protein localises to the secreted. Its subcellular location is the cell wall. It catalyses the reaction Preferential cleavage: (Ac)2-L-Lys-D-Ala-|-D-Ala. Also transpeptidation of peptidyl-alanyl moieties that are N-acyl substituents of D-alanine.. The catalysed reaction is [GlcNAc-(1-&gt;4)-Mur2Ac(oyl-L-Ala-gamma-D-Glu-L-Lys-D-Ala-D-Ala)](n)-di-trans,octa-cis-undecaprenyl diphosphate + beta-D-GlcNAc-(1-&gt;4)-Mur2Ac(oyl-L-Ala-gamma-D-Glu-L-Lys-D-Ala-D-Ala)-di-trans,octa-cis-undecaprenyl diphosphate = [GlcNAc-(1-&gt;4)-Mur2Ac(oyl-L-Ala-gamma-D-Glu-L-Lys-D-Ala-D-Ala)](n+1)-di-trans,octa-cis-undecaprenyl diphosphate + di-trans,octa-cis-undecaprenyl diphosphate + H(+). It functions in the pathway cell wall biogenesis; peptidoglycan biosynthesis. Cell wall formation. Synthesis of cross-linked peptidoglycan (PG) from the lipid intermediates. Binds dansylated lipid II and catalyzes the polymerization of glycan chains. Hydrolyzes S2d (N-benzoyl-D-alanylmercaptoacetic acid) molecule, a synthetic thiolester analog of cell wall stem peptide. Active against bocillin, a fluorescent penicillin. No transpeptidase activity with non-fluorescent lysine-containing lipid II as substrate. The protein is Penicillin-binding protein 2a of Streptococcus pneumoniae serotype 2 (strain D39 / NCTC 7466).